The sequence spans 130 residues: uncharacterized protein (130 aa).

A disordered region spans residues 76–102 (RKCKNGPSPNKRGSASGCSRRGGGRGS).

This is an uncharacterized protein from Saccharomyces cerevisiae (strain ATCC 204508 / S288c) (Baker's yeast).